Consider the following 370-residue polypeptide: Phosphate-binding protein PstS 2 (370 aa).

The signal sequence occupies residues 1-22; the sequence is MKFARSGAAVSLLAAGTLVLTA. The N-palmitoyl cysteine moiety is linked to residue cysteine 23. Cysteine 23 carries S-diacylglycerol cysteine lipidation. Residues 54–56, serine 84, aspartate 102, and 191–193 each bind phosphate; these read STA and SGT.

This sequence belongs to the PstS family. As to quaternary structure, the complex is composed of two ATP-binding proteins (PstB), two transmembrane proteins (PstC and PstA) and a solute-binding protein (PstS).

Its subcellular location is the cell membrane. Functionally, functions in inorganic phosphate uptake, although probably not the main uptake protein under phosphate starvation. Part of the ABC transporter complex PstSACB involved in phosphate import. In Mycobacterium tuberculosis (strain ATCC 25618 / H37Rv), this protein is Phosphate-binding protein PstS 2 (pstS2).